We begin with the raw amino-acid sequence, 537 residues long: Putative cysteine ligase BshC (537 aa).

A coiled-coil region spans residues 422–450 (IEKVEGMIEQQRRLNKDLLDEVAGNQNNI).

The protein belongs to the BshC family.

Functionally, involved in bacillithiol (BSH) biosynthesis. May catalyze the last step of the pathway, the addition of cysteine to glucosamine malate (GlcN-Mal) to generate BSH. The sequence is that of Putative cysteine ligase BshC from Staphylococcus aureus (strain COL).